The primary structure comprises 446 residues: MENILDLWNQALAQIEKKLSKPSFETWMKSTKAHSLQGDTLTITAPNEFARDWLESRYLHLIADTIYELTGEELSVKFVIPQNQDEENFLPKPQVKKAAKEEPSDFPQSMLNPKYTFDTFVIGSGNRFAHAASLAVAEAPAKAYNPLFIYGGVGLGKTHLMHAIGHYVIDHNPSAKVVYLSSEKFTNEFINSIRDNKAVDFRNRYRNVDVLLIDDIQFLAGKEQTQEEFFHTFNTLHEESKQIVISSDRPPKEIPTLEDRLRSRFEWGLITDITPPDLETRIAILRKKAKAEGLDIPNEVMLYIANQIDSNIRELEGALIRVVAYSSLINKDINADLAAEALKDIIPSSKPKVITIKEIQRIVGQQFNIKLEDFKAKKRTKSVAFPRQIAMYLSREMTDSSLPKIGEEFGGRDHTTVIHAHEKISKLLIDDEQLQQQVKEIKELLK.

The interval 1–72 is domain I, interacts with DnaA modulators; the sequence is MENILDLWNQ…ADTIYELTGE (72 aa). The segment at 72–109 is domain II; that stretch reads EELSVKFVIPQNQDEENFLPKPQVKKAAKEEPSDFPQS. A domain III, AAA+ region region spans residues 110–326; the sequence is MLNPKYTFDT…GALIRVVAYS (217 aa). ATP-binding residues include glycine 154, glycine 156, lysine 157, and threonine 158. The tract at residues 327 to 446 is domain IV, binds dsDNA; sequence SLINKDINAD…QVKEIKELLK (120 aa).

Belongs to the DnaA family. Oligomerizes as a right-handed, spiral filament on DNA at oriC.

The protein localises to the cytoplasm. In terms of biological role, plays an essential role in the initiation and regulation of chromosomal replication. ATP-DnaA binds to the origin of replication (oriC) to initiate formation of the DNA replication initiation complex once per cell cycle. Binds the DnaA box (a 9 base pair repeat at the origin) and separates the double-stranded (ds)DNA. Forms a right-handed helical filament on oriC DNA; dsDNA binds to the exterior of the filament while single-stranded (ss)DNA is stabiized in the filament's interior. The ATP-DnaA-oriC complex binds and stabilizes one strand of the AT-rich DNA unwinding element (DUE), permitting loading of DNA polymerase. After initiation quickly degrades to an ADP-DnaA complex that is not apt for DNA replication. Binds acidic phospholipids. The sequence is that of Chromosomal replication initiator protein DnaA from Bacillus velezensis (strain DSM 23117 / BGSC 10A6 / LMG 26770 / FZB42) (Bacillus amyloliquefaciens subsp. plantarum).